Consider the following 349-residue polypeptide: Protein Wnt-7b (349 aa).

Positions 1–24 (MHRNFRKWIFYVFLCFGVIYVKLG) are cleaved as a signal peptide. Cystine bridges form between cysteine 73-cysteine 84, cysteine 123-cysteine 131, cysteine 133-cysteine 152, cysteine 200-cysteine 214, and cysteine 202-cysteine 209. Asparagine 83 and asparagine 127 each carry an N-linked (GlcNAc...) asparagine glycan. A lipid anchor (O-palmitoleoyl serine; by PORCN) is attached at serine 206. Positions 238-266 (VEVVRASRLRQPTFLKIKQIKSYQKPMET) are disordered linker. Disulfide bonds link cysteine 278–cysteine 309, cysteine 294–cysteine 304, cysteine 308–cysteine 348, cysteine 324–cysteine 339, cysteine 326–cysteine 336, and cysteine 331–cysteine 332. Asparagine 295 carries an N-linked (GlcNAc...) asparagine glycan.

Belongs to the Wnt family. Post-translationally, palmitoleoylation is required for efficient binding to frizzled receptors. Depalmitoleoylation leads to Wnt signaling pathway inhibition. As to expression, expressed in differentiating lens fiber cells.

Its subcellular location is the secreted. The protein resides in the extracellular space. The protein localises to the extracellular matrix. In terms of biological role, ligand for members of the frizzled family of seven transmembrane receptors that functions in the canonical Wnt/beta-catenin signaling pathway. Required for normal fusion of the chorion and the allantois during placenta development. Required for central nervous system (CNS) angiogenesis and blood-brain barrier regulation. This is Protein Wnt-7b (WNT7B) from Gallus gallus (Chicken).